A 165-amino-acid polypeptide reads, in one-letter code: SsrA-binding protein (165 aa).

The tract at residues 141 to 165 (EDRRHAIAERETKREMDREISRRRR) is disordered.

It belongs to the SmpB family.

The protein localises to the cytoplasm. Functionally, required for rescue of stalled ribosomes mediated by trans-translation. Binds to transfer-messenger RNA (tmRNA), required for stable association of tmRNA with ribosomes. tmRNA and SmpB together mimic tRNA shape, replacing the anticodon stem-loop with SmpB. tmRNA is encoded by the ssrA gene; the 2 termini fold to resemble tRNA(Ala) and it encodes a 'tag peptide', a short internal open reading frame. During trans-translation Ala-aminoacylated tmRNA acts like a tRNA, entering the A-site of stalled ribosomes, displacing the stalled mRNA. The ribosome then switches to translate the ORF on the tmRNA; the nascent peptide is terminated with the 'tag peptide' encoded by the tmRNA and targeted for degradation. The ribosome is freed to recommence translation, which seems to be the essential function of trans-translation. This chain is SsrA-binding protein, found in Anaeromyxobacter sp. (strain Fw109-5).